Consider the following 331-residue polypeptide: Phosphate acyltransferase (331 aa).

Belongs to the PlsX family. In terms of assembly, homodimer. Probably interacts with PlsY.

It localises to the cytoplasm. The catalysed reaction is a fatty acyl-[ACP] + phosphate = an acyl phosphate + holo-[ACP]. It functions in the pathway lipid metabolism; phospholipid metabolism. In terms of biological role, catalyzes the reversible formation of acyl-phosphate (acyl-PO(4)) from acyl-[acyl-carrier-protein] (acyl-ACP). This enzyme utilizes acyl-ACP as fatty acyl donor, but not acyl-CoA. The chain is Phosphate acyltransferase from Mesoplasma florum (strain ATCC 33453 / NBRC 100688 / NCTC 11704 / L1) (Acholeplasma florum).